Consider the following 122-residue polypeptide: UPF0382 membrane protein SERP0230 (122 aa).

4 helical membrane passes run 3 to 23 (VFIILGALNAMMAVGTGAFGA), 46 to 66 (MYHGLGLLVIGLISGTTSINV), 69 to 89 (AGWLLFFGIVFFSGSLYFLAL), and 98 to 118 (ITPIGGVLFIIGWLVLVIATL).

It belongs to the UPF0382 family.

It localises to the cell membrane. This Staphylococcus epidermidis (strain ATCC 35984 / DSM 28319 / BCRC 17069 / CCUG 31568 / BM 3577 / RP62A) protein is UPF0382 membrane protein SERP0230.